Consider the following 212-residue polypeptide: RNA chaperone ProQ (212 aa).

The tract at residues 114-149 is disordered; sequence RIAKAGKTSAPAANAKKPVKKPVARRPKAAPSAKPV. Over residues 118–129 the composition is skewed to low complexity; it reads AGKTSAPAANAK. A compositionally biased stretch (basic residues) spans 130–141; it reads KPVKKPVARRPK.

This sequence belongs to the ProQ family.

The protein resides in the cytoplasm. Functionally, RNA chaperone with significant RNA binding, RNA strand exchange and RNA duplexing activities. This chain is RNA chaperone ProQ, found in Shewanella piezotolerans (strain WP3 / JCM 13877).